Reading from the N-terminus, the 148-residue chain is Large ribosomal subunit protein uL15 (148 aa).

Positions 1 to 30 (MPSRLRKTRKLRGHVSHGHGRIGKHRKHPG) are enriched in basic residues. The disordered stretch occupies residues 1-37 (MPSRLRKTRKLRGHVSHGHGRIGKHRKHPGGRGNAGG). His39 is modified ((3S)-3-hydroxyhistidine). Lys47 and Lys55 each carry N6-acetyllysine. Residue Ser68 is modified to Phosphoserine. At Lys110 the chain carries N6-acetyllysine.

It belongs to the universal ribosomal protein uL15 family. In terms of assembly, component of the large ribosomal subunit. Hydroxylated on His-39 by MINA.

It is found in the cytoplasm. Component of the large ribosomal subunit. The ribosome is a large ribonucleoprotein complex responsible for the synthesis of proteins in the cell. The polypeptide is Large ribosomal subunit protein uL15 (Rpl27a) (Rattus norvegicus (Rat)).